The following is a 78-amino-acid chain: Small venom protein 2 (78 aa).

A signal peptide spans 1-19; the sequence is MKFIVLLGALLALLVAVSA. Residues 20–42 constitute a propeptide that is removed on maturation; sequence DRIAREAPEMESVDEAVLTRQAR.

As to expression, expressed by the venom gland.

Its subcellular location is the secreted. The sequence is that of Small venom protein 2 from Pimpla hypochondriaca (Parasitoid wasp).